The sequence spans 358 residues: WD repeat-containing protein 53 (358 aa).

WD repeat units follow at residues 1 to 38 (MAVK…AWGE), 43 to 80 (LGHT…VLDV), 85 to 123 (DSLD…ILDL), 127 to 166 (KVIR…LWSL), 173 to 225 (WITN…RIFR), and 232 to 270 (EQEL…LWDA). Positions 273 to 311 (EVEKKQKSPTKRTHRKKPKRGTCTKQGGNTNASVTDEEE) are disordered. Positions 279–294 (KSPTKRTHRKKPKRGT) are enriched in basic residues. Polar residues predominate over residues 295-306 (CTKQGGNTNASV). A WD 7 repeat occupies 314 to 355 (NILPKLNIEHGEKVNWLLGTKIKGHQNILVADQTSCISVYPL).

It belongs to the WD repeat WDR53 family.

This chain is WD repeat-containing protein 53 (WDR53), found in Homo sapiens (Human).